Reading from the N-terminus, the 98-residue chain is MSRACELTGKAVMSGNNVSHANNKTRRRFLPNLCDVTLMSEALGQSYRLRVSANALRSVEHRGGLDAFLLKAKSNELSQRARLLKKQVAKKLTEQTEA.

It belongs to the bacterial ribosomal protein bL28 family.

This Chelativorans sp. (strain BNC1) protein is Large ribosomal subunit protein bL28.